The primary structure comprises 158 residues: NADH-quinone oxidoreductase subunit B (158 aa).

Cysteine 36, cysteine 37, cysteine 101, and cysteine 131 together coordinate [4Fe-4S] cluster.

It belongs to the complex I 20 kDa subunit family. NDH-1 is composed of 14 different subunits. Subunits NuoB, C, D, E, F, and G constitute the peripheral sector of the complex. [4Fe-4S] cluster serves as cofactor.

It localises to the cell inner membrane. The catalysed reaction is a quinone + NADH + 5 H(+)(in) = a quinol + NAD(+) + 4 H(+)(out). Its function is as follows. NDH-1 shuttles electrons from NADH, via FMN and iron-sulfur (Fe-S) centers, to quinones in the respiratory chain. The immediate electron acceptor for the enzyme in this species is believed to be ubiquinone. Couples the redox reaction to proton translocation (for every two electrons transferred, four hydrogen ions are translocated across the cytoplasmic membrane), and thus conserves the redox energy in a proton gradient. The chain is NADH-quinone oxidoreductase subunit B from Francisella tularensis subsp. tularensis (strain FSC 198).